A 103-amino-acid polypeptide reads, in one-letter code: Large ribosomal subunit protein bL21 (103 aa).

The protein belongs to the bacterial ribosomal protein bL21 family. Part of the 50S ribosomal subunit. Contacts protein L20.

Functionally, this protein binds to 23S rRNA in the presence of protein L20. This is Large ribosomal subunit protein bL21 from Variovorax paradoxus (strain S110).